We begin with the raw amino-acid sequence, 294 residues long: Protoheme IX farnesyltransferase (294 aa).

8 helical membrane-spanning segments follow: residues 19-39 (PKQTFLLLLTSIFTYVGAGGM), 41-61 (LDALLLLTAAMLLSISGTTSV), 89-109 (VEALSFGLLLFIVGLGLSYLI), 111-131 (PWTAFATSLGMAFDILVYTMW), 138-158 (LSIIFGGVAGAAPSLAGWAAA), 166-186 (AIMIALITILWIPSHIWYISI), 218-238 (VLMIILQLLLFLMGPLGPIFL), and 272-292 (SPVEGVIFLAIALDGIFRILW).

The protein belongs to the UbiA prenyltransferase family. Protoheme IX farnesyltransferase subfamily.

The protein resides in the cell membrane. The catalysed reaction is heme b + (2E,6E)-farnesyl diphosphate + H2O = Fe(II)-heme o + diphosphate. Its pathway is porphyrin-containing compound metabolism; heme O biosynthesis; heme O from protoheme: step 1/1. Converts heme B (protoheme IX) to heme O by substitution of the vinyl group on carbon 2 of heme B porphyrin ring with a hydroxyethyl farnesyl side group. In Korarchaeum cryptofilum (strain OPF8), this protein is Protoheme IX farnesyltransferase.